The sequence spans 2475 residues: MRFSWKKLVSAALVMALLVGIVYPAASGRGAVASAASGTTVELVPTDDAFTSAVAKDANANGTWMQLKGSIGGQRYIYMKFDLTALAGVEADRIENAKVWLKKMGTNGTAMTVGLRAVDDTSWSESTLTWNNAPVYGSQVLSQQSVLSTPDVYYPFDLDEYLKTQLAAGKSKLAIAFVPISTLNENMEFYARESTANTPKLVVELKDEPPAPTGLMQLVQSFGGHNKGHLRVVEFDATPASTTGNGTVGITADGAAPAAAADFPIALRFGTDGTIKAANAAGFESKTPVNYTAGQKYHVKAMINLSLGTYDLWLTPPNAGQPVLLAADYAFAASAPALNDIGGVHATADAQSTDVPAVANARLIADHFVSKAPFKDEQGQSLAIRLESDNSLANRSYAIKFDMNLTGNPLETDALISYADRSVTLNGFPDLAYIVRSNFGNFDVRNDNVYASSHPSTAQSNRTYQVEVRINPASGTGQPTRTYDVWIAPEGEQPVQLADQFKARNYANTGYALNNIGQAFVYSQADGLLSIDNHVVQDGQRLDEALARVNAASGEAAMTAALESNALGLPMERYRLMDAAKRAQVAQDVLAGRPAEGYAHALSVQAVFVSAVANRLDTENPTAPANVQVAISNTMQAHVSWTASSDDTGILYYKVFRDGALVGTVTNATSFVDNGLAPATEYTYVVKAYDLVLKEAVSQPATATSPGEQAQVRIPFSAEAIATAFGQPLLDYNLETHSGTLKWVMEWREEYEKSANALKLLTLLSASAPDYIGPDGVTTASAKALQHLRSVTAGGNEPGFAGNGLSGQGYMPLLSAIVMAKKKAPAIWNALTAAEKEKLDLMILAGLYGAKFAYDDENDNKTGIDATGNFDKEWNPNHRSGIAGAIMAMYYFEDAQWLNDQMRSFNYDDWLARLTAAGLTNVRTIYQNSGKTLTEREIRKDAAGDGFVYKGHPLSQPGKIMAEFVNYTFSHPVSPVGGFDSGIGKYRGYIVDGQDDLPNLGADSMGFEFDTLDANGKRSSLVYVFMGWKPNVDAITPVLLLDNIDSGLTSAETRDVVSRLSIGTTDMLYKNEHGYMTYAKGVNEGVKSLNGPILTINEEIWNRILNNPAAPMEAVNQASSAGQMRTALEASALGMILYGYGALSETGKNAVAQHVLDARPAAGYANKAAAQNELYEGVRLQALLALSQAQTAEQMRSALESRALGLYKPKYETASQDKKQFVAQYLLDNKPADGFLTKTEVREQVESALEPQGNQLRNLPPLASGEKRINLADYDHWPQQHGDAEVALWADDKTGAFSLTIDDNFENEHDTWRSLAQQYGFKFSWFVITSLIKDPNKWRTLAAEGHEIGSHTVTHEDKGSTLDPAHLHSEYADSQALLNTIEGVRATTLAYPFGSGREDIAAEYYIAARGTVGLPNPADSINYMNTQSLSVRPGSLELTNQAANGNSVEAMVKTLVDPNHKVWSASYYRGWSNMLVHSLNESGKTPSDGVTRTSRDLTQYLLTLLDTYRDQIWVGRYGDIVRYSQQRDTAHIVVTRKDDRKITFNLTDRMDDTLFDYPLTVKVRVDDAWSDIGATQAGEPIPFVETIRDGKRYLLVKAVPDKGSVSIVPDAASPLNVVNGAVTSEQMLSAIAAPGLGLDLGEFNALGAGKKRMVGSRLLEVRPADGYADAAALQDALDAAVEEANNAPSLSENASLSDLKVNGVTIAGFAPETYAYDIMLPEGTTALPVVSFKVADTGKATAVLQNAPALPGTAKVTVTAEDNWTVATYTLRFQVRISALQRVNTAPDASAMRTAIENAALGLVLAAYNGLTSEQKNSVAASVLTHRPATGYADVQAVQAELNAALPKINAPLLAHAIVDQLNPDTVSTANWTNLYGGTSGRKGGVYMKFNIASLAGLEADAIGDAKVQFFTTREGTVIGYAAPSSWEAPLTWNTQPLADLKNSNMAALAEIGRTAVQATGANYEMNITQYVKDAAAADKTELSLVLLGSNNTNITMQKIPTAFALSVTLATYGEPNPEPSPLAAVNEAGDAAAMQGAIAAVELDLNLTAYNGLTAAQRIDVAQALLDNRPAAGYAHALAVQVALDAAVAAAQPANQAPGGTLAASAEQLQPGQQLELTVGVSDASRFTGADILVHYDPQALTFATELYEGVRMLKAEAIASLQANYQVAAAMAEQPGTIKILLFTAGAGQPLSGTLPLFKLRASVKDDAQTGVSTAVSLSDFELTFEGEDSVWPDTTRAAVSLQIAAHPVEADKTALIAKIAHAQALLTGATVGANPGQYPQAAYDALADAIGLAEEKRDLTGVSQAAVDEAVASLGTAEQQFLNAVIPGVPADLTALNAAIAKAQRLHDNGPYGEKIGQYPQSAKVPLKSALDAAKAVGGSGASSQESVNAAAASLNGAIQTFERSLVTLVGGGATKVGIRDLSIVAKYYGVTSSDPNWGKVSAAAIDGGNEITIEVLAAVARMILADWAAGQ.

A signal peptide spans 1–35 (MRFSWKKLVSAALVMALLVGIVYPAASGRGAVASA). One can recognise a Fibronectin type-III domain in the interval 623–708 (APANVQVAIS…QPATATSPGE (86 aa)). A NodB homology domain is found at 1295–1518 (GAFSLTIDDN…RDQIWVGRYG (224 aa)). Positions 2111–2223 (QPGQQLELTV…VSTAVSLSDF (113 aa)) constitute a Cohesin domain.

Post-translationally, subject to proteolytic processing after secretion. Cleavage occurs between Gly-1205 and Leu-1206. This gives rise to a N-terminal gellan lyase of 130 kDa being the mature form of the gellan lyase. The function of C-terminal gellan lyase is not known.

The protein localises to the secreted. It carries out the reaction Eliminative cleavage of beta-D-glucopyranosyl-(1-&gt;4)-beta-D-glucopyranosyluronate bonds of gellan backbone releasing tetrasaccharides containing a 4-deoxy-4,5-unsaturated D-glucopyranosyluronic acid at the non-reducing end. The tetrasaccharide produced from deacetylated gellan is beta-D-4-deoxy-Delta(4)-GlcAp-(1-&gt;4)-beta-D-Glcp-(1-&gt;4)-alpha-L-Rhap-(1-&gt;3)-beta-D-Glcp.. Cleaves the glycosidic bonds of gellan backbone and releases tetrasaccharide units of glucuronyl-glucosyl-rhamnosyl-glucose with unsaturated glucuronic acid at the non-reducing terminal. The enzyme is highly specific to the heteropolysaccharide gellan, especially deacetylated gellan. This Bacillus sp protein is Gellan lyase.